Reading from the N-terminus, the 104-residue chain is Small ribosomal subunit protein uS10 (104 aa).

Belongs to the universal ribosomal protein uS10 family. As to quaternary structure, part of the 30S ribosomal subunit.

Its function is as follows. Involved in the binding of tRNA to the ribosomes. This Dichelobacter nodosus (strain VCS1703A) protein is Small ribosomal subunit protein uS10.